The following is a 339-amino-acid chain: Glycerol-3-phosphate dehydrogenase [NAD(P)+] (339 aa).

Positions 15, 16, 36, and 110 each coordinate NADPH. Sn-glycerol 3-phosphate is bound by residues lysine 110, glycine 139, and threonine 141. Alanine 143 is a binding site for NADPH. Residues lysine 195, aspartate 248, serine 258, arginine 259, and asparagine 260 each contribute to the sn-glycerol 3-phosphate site. Lysine 195 acts as the Proton acceptor in catalysis. Arginine 259 is an NADPH binding site. The NADPH site is built by valine 283 and glutamate 285.

The protein belongs to the NAD-dependent glycerol-3-phosphate dehydrogenase family.

It is found in the cytoplasm. It catalyses the reaction sn-glycerol 3-phosphate + NAD(+) = dihydroxyacetone phosphate + NADH + H(+). The catalysed reaction is sn-glycerol 3-phosphate + NADP(+) = dihydroxyacetone phosphate + NADPH + H(+). It functions in the pathway membrane lipid metabolism; glycerophospholipid metabolism. Its function is as follows. Catalyzes the reduction of the glycolytic intermediate dihydroxyacetone phosphate (DHAP) to sn-glycerol 3-phosphate (G3P), the key precursor for phospholipid synthesis. This chain is Glycerol-3-phosphate dehydrogenase [NAD(P)+], found in Klebsiella pneumoniae subsp. pneumoniae (strain ATCC 700721 / MGH 78578).